The sequence spans 366 residues: Chorismate synthase (366 aa).

Residue Arg-48 participates in NADP(+) binding. FMN is bound by residues 125–127 (RSS), Gly-283, 298–302 (KPTPS), and Arg-324.

The protein belongs to the chorismate synthase family. As to quaternary structure, homotetramer. It depends on FMNH2 as a cofactor.

The enzyme catalyses 5-O-(1-carboxyvinyl)-3-phosphoshikimate = chorismate + phosphate. The protein operates within metabolic intermediate biosynthesis; chorismate biosynthesis; chorismate from D-erythrose 4-phosphate and phosphoenolpyruvate: step 7/7. In terms of biological role, catalyzes the anti-1,4-elimination of the C-3 phosphate and the C-6 proR hydrogen from 5-enolpyruvylshikimate-3-phosphate (EPSP) to yield chorismate, which is the branch point compound that serves as the starting substrate for the three terminal pathways of aromatic amino acid biosynthesis. This reaction introduces a second double bond into the aromatic ring system. The protein is Chorismate synthase of Lachnospira eligens (strain ATCC 27750 / DSM 3376 / VPI C15-48 / C15-B4) (Eubacterium eligens).